Here is an 837-residue protein sequence, read N- to C-terminus: Zinc fingers and homeoboxes protein 2 (837 aa).

The tract at residues 27-77 (VDRAKEKGIGTPQPDVAKDSWAAELENSSKENEVIEVKSMGESQSKKLQGG) is interaction with EFNB1. Thr37 carries the post-translational modification Phosphothreonine. Lys64 is covalently cross-linked (Glycyl lysine isopeptide (Lys-Gly) (interchain with G-Cter in SUMO2)). C2H2-type zinc fingers lie at residues 78 to 101 (YECK…DMQH) and 110 to 133 (YVCA…SKFH). Low complexity predominate over residues 164 to 180 (SITTSGPGTGDSDSGIS). The disordered stretch occupies residues 164 to 204 (SITTSGPGTGDSDSGISVSKTPIMKPGKPKADAKKVPKKPE). Residues 192-204 (PKADAKKVPKKPE) are compositionally biased toward basic and acidic residues. The tract at residues 195 to 358 (DAKKVPKKPE…PAQLAPTKVT (164 aa)) is required for homodimerization. Thr207 bears the Phosphothreonine mark. 4 DNA-binding regions (homeobox) span residues 263–324 (NTTK…WSPE), 439–501 (TPAS…IVHI), 530–591 (PQKF…EQAV), and 628–690 (SPSP…TVKW). The required for repressor activity stretch occupies residues 263–446 (NTTKYNSALD…PLTPASDRKK (184 aa)). Positions 263-497 (NTTKYNSALD…SDHRYRCQRG (235 aa)) are required for interaction with NFYA. The interval 317–446 (HGISWSPEEV…PLTPASDRKK (130 aa)) is required for nuclear localization. A disordered region spans residues 404-445 (GQKRPLVTPQAAPEPKRPHIAQVPEPPPKVANPPLTPASDRK). The segment covering 427 to 439 (PEPPPKVANPPLT) has biased composition (pro residues). Residue Lys455 forms a Glycyl lysine isopeptide (Lys-Gly) (interchain with G-Cter in SUMO2) linkage. A disordered region spans residues 755 to 837 (PAKDCLPAKP…DCVPAEAGQA (83 aa)). A phosphoserine mark is found at Ser825 and Ser827.

Belongs to the ZHX family. As to quaternary structure, homodimer (via homeobox domain). Heterodimer with ZHX1 (via homeobox domain 1). Heterodimer with ZHX3 (via homeobox domain 1). Heterodimerization with ZHX1 is not necessary for repressor activity. Interacts (via homeobox domain) with NFYA (via N-terminus). Interacts with EFNB1 intracellular domain peptide; the interaction enhances ZHX2 transcriptional repression activity. As to expression, ubiquitously expressed. Expressed in podocytes.

It localises to the nucleus. Acts as a transcriptional repressor. Represses the promoter activity of the CDC25C gene stimulated by NFYA. May play a role in retinal development where it regulates the composition of bipolar cell populations, by promoting differentiation of bipolar OFF-type cells. In the brain, may promote maintenance and suppress differentiation of neural progenitor cells in the developing cortex. The polypeptide is Zinc fingers and homeoboxes protein 2 (ZHX2) (Homo sapiens (Human)).